A 203-amino-acid chain; its full sequence is MIQTAFTALLLLAIGYLLGAIPSGYLAGRWLKGIDLRDCGSGSTGATNVLRNVGKGPALVVFLIDVGKGALAVLLAKSVGLNDWLQVLTGLAALAGHIWPVWLGWKGGKAVATGLGIFLGLAWPVGLACFGLFMAVISIFRIVSLSSVVAAIGLPLLMLLSGSSSAYVVVSLVASLMVLWRHRSNIERLLAGTEPKIGAKAKG.

The next 4 membrane-spanning stretches (helical) occupy residues 1–21 (MIQT…LGAI), 84–104 (WLQV…VWLG), 117–137 (IFLG…MAVI), and 157–179 (LMLL…LMVL).

The protein belongs to the PlsY family. In terms of assembly, probably interacts with PlsX.

Its subcellular location is the cell inner membrane. It catalyses the reaction an acyl phosphate + sn-glycerol 3-phosphate = a 1-acyl-sn-glycero-3-phosphate + phosphate. It functions in the pathway lipid metabolism; phospholipid metabolism. Catalyzes the transfer of an acyl group from acyl-phosphate (acyl-PO(4)) to glycerol-3-phosphate (G3P) to form lysophosphatidic acid (LPA). This enzyme utilizes acyl-phosphate as fatty acyl donor, but not acyl-CoA or acyl-ACP. This Synechococcus sp. (strain CC9605) protein is Glycerol-3-phosphate acyltransferase.